The chain runs to 416 residues: MEAKPLASSSSEPNMISPSSNIKPKLKDEDYMELVCENGQILAKIRRPKNNGSFQKQRRQSLLDLYETEYSEGFKKNIKILGDTQVVPVSQSKPQQDKETNEQMNNNKKKLKSSKIEFERNVSKSNKCVESSTLIDVSAKGPKNVEVTTAPPDEQSAAVGRSTELYFASSSKFSRGTSRDLSCCSLKRKYGDIEEEESTYLSNNSDDESDDAKTQVHARTRKPVTKRKRSTEVHKLYERKRRDEFNKKMRALQDLLPNCYKDDKASLLDEAIKYMRTLQLQVQMMSMGNGLIRPPTMLPMGHYSPMGLGMHMGAAATPTSIPQFLPMNVQATGFPGMNNAPPQMLSFLNHPSGLIPNTPIFSPLENCSQPFVVPSCVSQTQATSFTQFPKSASASNLEDAMQYRGSNGFSYYRSPN.

Disordered stretches follow at residues 1-24 (MEAK…NIKP), 89-113 (VSQS…KLKS), and 197-231 (ESTY…KRST). Low complexity predominate over residues 8 to 22 (SSSSEPNMISPSSNI). Positions 95-124 (QQDKETNEQMNNNKKKLKSSKIEFERNVSK) form a coiled coil. Over residues 216 to 229 (VHARTRKPVTKRKR) the composition is skewed to basic residues. The bHLH domain occupies 229 to 278 (RSTEVHKLYERKRRDEFNKKMRALQDLLPNCYKDDKASLLDEAIKYMRTL).

As to quaternary structure, homodimer. Interacts with APRR1/TOC1. Associates to PTAC12/HMR/PAP5 which acts as a transcriptional coactivator. In terms of tissue distribution, mainly expressed in stems, fruits and flowers and, to a lower extent, in leaves, seedlings and roots. Accumulates in etiolated seedlings.

Its subcellular location is the nucleus. Functionally, transcription factor. Involved in responses to transient and long-term shade. Required for the light-mediated inhibition of hypocotyl elongation. Necessary for rapid light-induced expression of the photomorphogenesis- and circadian-related gene APRR9. Seems to play a role in multiple PHYB responses, such as flowering transition and petiole elongation. The chain is Transcription factor PIL1 from Arabidopsis thaliana (Mouse-ear cress).